A 204-amino-acid polypeptide reads, in one-letter code: MDINYKLYLITDRSFLNGRSLAECVEDAIKGGATLVQVREKNISTRDFYNIAREVQEVTTKYNVPLLINDRIDIALAINADGVHLGQSDMPIELARKILGDDKVIGISAGNVKEAIEAEKAGADYVGLGTVFFTGTKKDIDEPIGLAGLKEITEKITIPSVAIGGINKENAKSVLATGVDGISVISAILKNDDIQGASKTLANI.

Residues 37 to 41 (QVREK) and asparagine 69 each bind 4-amino-2-methyl-5-(diphosphooxymethyl)pyrimidine. Positions 70 and 89 each coordinate Mg(2+). Serine 108 serves as a coordination point for 4-amino-2-methyl-5-(diphosphooxymethyl)pyrimidine. 134 to 136 (TGT) is a binding site for 2-[(2R,5Z)-2-carboxy-4-methylthiazol-5(2H)-ylidene]ethyl phosphate. 4-amino-2-methyl-5-(diphosphooxymethyl)pyrimidine is bound at residue lysine 137. 2-[(2R,5Z)-2-carboxy-4-methylthiazol-5(2H)-ylidene]ethyl phosphate contacts are provided by residues glycine 165 and 185 to 186 (IS).

The protein belongs to the thiamine-phosphate synthase family. Mg(2+) serves as cofactor.

The enzyme catalyses 2-[(2R,5Z)-2-carboxy-4-methylthiazol-5(2H)-ylidene]ethyl phosphate + 4-amino-2-methyl-5-(diphosphooxymethyl)pyrimidine + 2 H(+) = thiamine phosphate + CO2 + diphosphate. It catalyses the reaction 2-(2-carboxy-4-methylthiazol-5-yl)ethyl phosphate + 4-amino-2-methyl-5-(diphosphooxymethyl)pyrimidine + 2 H(+) = thiamine phosphate + CO2 + diphosphate. The catalysed reaction is 4-methyl-5-(2-phosphooxyethyl)-thiazole + 4-amino-2-methyl-5-(diphosphooxymethyl)pyrimidine + H(+) = thiamine phosphate + diphosphate. It participates in cofactor biosynthesis; thiamine diphosphate biosynthesis; thiamine phosphate from 4-amino-2-methyl-5-diphosphomethylpyrimidine and 4-methyl-5-(2-phosphoethyl)-thiazole: step 1/1. Functionally, condenses 4-methyl-5-(beta-hydroxyethyl)thiazole monophosphate (THZ-P) and 2-methyl-4-amino-5-hydroxymethyl pyrimidine pyrophosphate (HMP-PP) to form thiamine monophosphate (TMP). This chain is Thiamine-phosphate synthase, found in Clostridium novyi (strain NT).